Reading from the N-terminus, the 463-residue chain is Ribosomal protein uS12 methylthiotransferase RimO (463 aa).

The interval Met1–Arg26 is disordered. The segment covering Pro8–Pro19 has biased composition (low complexity). The MTTase N-terminal domain maps to Pro30–Pro140. Residues Cys39, Cys75, Cys104, Cys171, Cys175, and Cys178 each coordinate [4Fe-4S] cluster. Positions Leu157–Ala395 constitute a Radical SAM core domain. The TRAM domain occupies Ala398 to Leu463.

This sequence belongs to the methylthiotransferase family. RimO subfamily. [4Fe-4S] cluster is required as a cofactor.

It is found in the cytoplasm. The catalysed reaction is L-aspartate(89)-[ribosomal protein uS12]-hydrogen + (sulfur carrier)-SH + AH2 + 2 S-adenosyl-L-methionine = 3-methylsulfanyl-L-aspartate(89)-[ribosomal protein uS12]-hydrogen + (sulfur carrier)-H + 5'-deoxyadenosine + L-methionine + A + S-adenosyl-L-homocysteine + 2 H(+). In terms of biological role, catalyzes the methylthiolation of an aspartic acid residue of ribosomal protein uS12. This Paracoccus denitrificans (strain Pd 1222) protein is Ribosomal protein uS12 methylthiotransferase RimO.